We begin with the raw amino-acid sequence, 729 residues long: Glycine--tRNA ligase, mitochondrial 1 (729 aa).

At Met1 the chain carries N-acetylmethionine. The N-terminal 28 residues, 1 to 28 (MRIFSTFVFHRRQQIFNLRQFQTTTILR), are a transit peptide targeting the mitochondrion. A WHEP-TRS domain is found at 50-106 (SLSEKSSSVEAQGNAVRALKASRAAKPEIDAAIEQLNKLKLEKSTVEKELQSIISSS). Glu296 contacts glycine. ATP-binding positions include 328-330 (RNE) and 339-340 (RV). Glu347 lines the glycine pocket. 454–455 (EC) is an ATP binding site. 575 to 577 (EPS) is a binding site for glycine. Arg582 is an ATP binding site.

The protein belongs to the class-II aminoacyl-tRNA synthetase family. As to quaternary structure, homodimer.

The protein resides in the mitochondrion. Its subcellular location is the cytoplasm. It is found in the cytosol. The catalysed reaction is tRNA(Gly) + glycine + ATP = glycyl-tRNA(Gly) + AMP + diphosphate. The enzyme catalyses 2 ATP + H(+) = P(1),P(4)-bis(5'-adenosyl) tetraphosphate + diphosphate. In terms of biological role, catalyzes the ATP-dependent ligation of glycine to the 3'-end of its cognate tRNA, via the formation of an aminoacyl-adenylate intermediate (Gly-AMP). Also produces diadenosine tetraphosphate (Ap4A), a universal pleiotropic signaling molecule needed for cell regulation pathways, by direct condensation of 2 ATPs. Thereby, may play a special role in Ap4A homeostasis. This Arabidopsis thaliana (Mouse-ear cress) protein is Glycine--tRNA ligase, mitochondrial 1.